Here is a 428-residue protein sequence, read N- to C-terminus: Serine--tRNA ligase (428 aa).

Position 231 to 233 (231 to 233) interacts with L-serine; the sequence is TSE. Residues 262–264 and valine 278 contribute to the ATP site; that span reads RRE. Glutamate 285 lines the L-serine pocket. An ATP-binding site is contributed by 349–352; that stretch reads ELTS. Position 384 (threonine 384) interacts with L-serine.

This sequence belongs to the class-II aminoacyl-tRNA synthetase family. Type-1 seryl-tRNA synthetase subfamily. Homodimer. The tRNA molecule binds across the dimer.

Its subcellular location is the cytoplasm. It catalyses the reaction tRNA(Ser) + L-serine + ATP = L-seryl-tRNA(Ser) + AMP + diphosphate + H(+). The catalysed reaction is tRNA(Sec) + L-serine + ATP = L-seryl-tRNA(Sec) + AMP + diphosphate + H(+). Its pathway is aminoacyl-tRNA biosynthesis; selenocysteinyl-tRNA(Sec) biosynthesis; L-seryl-tRNA(Sec) from L-serine and tRNA(Sec): step 1/1. Its function is as follows. Catalyzes the attachment of serine to tRNA(Ser). Is also able to aminoacylate tRNA(Sec) with serine, to form the misacylated tRNA L-seryl-tRNA(Sec), which will be further converted into selenocysteinyl-tRNA(Sec). The sequence is that of Serine--tRNA ligase from Bifidobacterium longum subsp. infantis (strain ATCC 15697 / DSM 20088 / JCM 1222 / NCTC 11817 / S12).